A 229-amino-acid chain; its full sequence is Ribonuclease HII (229 aa).

One can recognise an RNase H type-2 domain in the interval 34-223 (WPVAGADEAG…LRKVEDGPQM (190 aa)). D40, E41, and D131 together coordinate a divalent metal cation.

It belongs to the RNase HII family. Mn(2+) serves as cofactor. Requires Mg(2+) as cofactor.

Its subcellular location is the cytoplasm. It carries out the reaction Endonucleolytic cleavage to 5'-phosphomonoester.. Functionally, endonuclease that specifically degrades the RNA of RNA-DNA hybrids. The sequence is that of Ribonuclease HII from Rhizobium leguminosarum bv. trifolii (strain WSM2304).